A 136-amino-acid chain; its full sequence is Piercer of microtubule wall 1 protein (136 aa).

Basic and acidic residues predominate over residues 1–16; it reads MSEEDPKACAEPEEPK. The tract at residues 1–27 is disordered; it reads MSEEDPKACAEPEEPKAGPPPEKTSDW.

It belongs to the PIERCE1 family. Microtubule inner protein component of sperm flagellar doublet microtubules. Interacts with CFAP53, ODAD1 and ODAD3; the interactions link the outer dynein arms docking complex (ODA-DC) to the internal microtubule inner proteins (MIP) in cilium axoneme. As to expression, expressed in trachea multiciliated cells.

The protein resides in the cytoplasm. It localises to the cytoskeleton. Its subcellular location is the cilium axoneme. It is found in the flagellum axoneme. Functionally, microtubule inner protein involved in the attachment of outer dynein arms (ODAs) to dynein-decorated doublet microtubules (DMTs) in cilia axoneme, which is required for motile cilia beating. Functions at the initial step of left-right asymmetry specification of the visceral organs. In Bos taurus (Bovine), this protein is Piercer of microtubule wall 1 protein (PIERCE1).